A 466-amino-acid polypeptide reads, in one-letter code: Adenosylhomocysteinase (466 aa).

Residues threonine 57, aspartate 132, and glutamate 192 each coordinate substrate. Residue 193 to 195 (TTT) participates in NAD(+) binding. Residues lysine 222 and aspartate 226 each coordinate substrate. NAD(+) contacts are provided by residues asparagine 227, 256–261 (GYGDVG), glutamate 279, asparagine 314, 335–337 (IGH), and asparagine 380.

The protein belongs to the adenosylhomocysteinase family. NAD(+) serves as cofactor.

The protein localises to the cytoplasm. The enzyme catalyses S-adenosyl-L-homocysteine + H2O = L-homocysteine + adenosine. It participates in amino-acid biosynthesis; L-homocysteine biosynthesis; L-homocysteine from S-adenosyl-L-homocysteine: step 1/1. In terms of biological role, may play a key role in the regulation of the intracellular concentration of adenosylhomocysteine. This Rhizobium meliloti (strain 1021) (Ensifer meliloti) protein is Adenosylhomocysteinase.